The following is a 104-amino-acid chain: Large ribosomal subunit protein bL21 (104 aa).

It belongs to the bacterial ribosomal protein bL21 family. As to quaternary structure, part of the 50S ribosomal subunit. Contacts protein L20.

This protein binds to 23S rRNA in the presence of protein L20. The protein is Large ribosomal subunit protein bL21 of Streptococcus thermophilus (strain ATCC BAA-491 / LMD-9).